The chain runs to 310 residues: MGKRRCVPPLEPKLAAGCCGVKKPKLSGSGTHSHGNQSTTVPGSSSGPLQNHQHVDNSSGRENVSDLTLGPGNSPITRMNTASGALSPLPRPNGTANSTKNLVVTAEMCCYCFDVLYCHLYGFPQPRLPRFTNDPYPLFVTWKTGRDKRLRGCIGTFSAMNLHSGLREYTLTSALKDSRFPPLTREELPKLFCSVSLLTNFEDASDYLDWEVGVHGIRIEFINEKGIKRTATYLPEVAKEQDWDQIQTIDSLLRKGGFKAPITSEFRKSIKLTRYRSEKVTISYAEYIASRQHCFQNGTLHAPPLYNHYS.

Positions 26–92 (LSGSGTHSHG…SGALSPLPRP (67 aa)) are disordered. Polar residues-rich tracts occupy residues 28–66 (GSGT…NVSD) and 74–84 (SPITRMNTASG). A Phosphoserine modification is found at Ser74. The AMMECR1 domain maps to 97–291 (NSTKNLVVTA…ISYAEYIASR (195 aa)).

This chain is AMMECR1-like protein (Ammecr1l), found in Mus musculus (Mouse).